The following is a 187-amino-acid chain: Elongation factor P (187 aa).

It belongs to the elongation factor P family.

It localises to the cytoplasm. It functions in the pathway protein biosynthesis; polypeptide chain elongation. Involved in peptide bond synthesis. Stimulates efficient translation and peptide-bond synthesis on native or reconstituted 70S ribosomes in vitro. Probably functions indirectly by altering the affinity of the ribosome for aminoacyl-tRNA, thus increasing their reactivity as acceptors for peptidyl transferase. The sequence is that of Elongation factor P from Flavobacterium psychrophilum (strain ATCC 49511 / DSM 21280 / CIP 103535 / JIP02/86).